A 124-amino-acid chain; its full sequence is Small ribosomal subunit protein uS12 (124 aa).

3-methylthioaspartic acid is present on Asp-89.

It belongs to the universal ribosomal protein uS12 family. As to quaternary structure, part of the 30S ribosomal subunit. Contacts proteins S8 and S17. May interact with IF1 in the 30S initiation complex.

In terms of biological role, with S4 and S5 plays an important role in translational accuracy. Functionally, interacts with and stabilizes bases of the 16S rRNA that are involved in tRNA selection in the A site and with the mRNA backbone. Located at the interface of the 30S and 50S subunits, it traverses the body of the 30S subunit contacting proteins on the other side and probably holding the rRNA structure together. The combined cluster of proteins S8, S12 and S17 appears to hold together the shoulder and platform of the 30S subunit. This is Small ribosomal subunit protein uS12 from Psychrobacter arcticus (strain DSM 17307 / VKM B-2377 / 273-4).